The following is a 78-amino-acid chain: Acyl carrier protein (78 aa).

The region spanning 2-77 (SDVLERVSKI…DAVKFISEKV (76 aa)) is the Carrier domain. Ser37 carries the O-(pantetheine 4'-phosphoryl)serine modification.

This sequence belongs to the acyl carrier protein (ACP) family. 4'-phosphopantetheine is transferred from CoA to a specific serine of apo-ACP by AcpS. This modification is essential for activity because fatty acids are bound in thioester linkage to the sulfhydryl of the prosthetic group.

Its subcellular location is the cytoplasm. It functions in the pathway lipid metabolism; fatty acid biosynthesis. Its function is as follows. Carrier of the growing fatty acid chain in fatty acid biosynthesis. This Maricaulis maris (strain MCS10) (Caulobacter maris) protein is Acyl carrier protein.